Here is a 166-residue protein sequence, read N- to C-terminus: KH homology domain-containing protein 1C (166 aa).

In terms of domain architecture, KH; atypical spans 19–78 (PLVFDMEEDKEDYIFGPHDEYLHTLEVHSNTLIQLERWFTPTGQTRVTVVGPLKARLWVM).

Belongs to the KHDC1 family.

The chain is KH homology domain-containing protein 1C (Khdc1c) from Mus musculus (Mouse).